The chain runs to 590 residues: Zinc finger protein 703 (590 aa).

Polar residues predominate over residues 1-14 (MSDSPAGSNPRTPE). Disordered regions lie at residues 1–43 (MSDS…DPLR), 96–293 (CSQI…AGHV), and 341–366 (LVGG…LTGA). N-acetylserine is present on S2. Composition is skewed to low complexity over residues 27 to 37 (PAVPAAVSLLP), 128 to 139 (RSAPGAASAAAA), 171 to 189 (GSSS…PGDK), and 207 to 219 (APVS…SSPG). Residues 241-251 (ELDKKDQEPKP) are compositionally biased toward basic and acidic residues. At S252 the chain carries Phosphoserine. Composition is skewed to gly residues over residues 260–273 (RGGG…GGAE) and 341–352 (LVGGQLSGGLGL). Residues 456-484 (HSCNWVAASGPCDKRFATSEELLSHLRTH) form a C2H2-type zinc finger. R580 is modified (omega-N-methylarginine).

The protein belongs to the Elbow/Noc family. Interacts with TLE4; increases transcriptional repression. Interacts with DCAF7 and PHB2. May interact with HSPD1. In terms of tissue distribution, expressed in mammary epithelium.

Its subcellular location is the nucleus. It localises to the cytoplasm. In terms of biological role, transcriptional corepressor which does not bind directly to DNA and may regulate transcription through recruitment of histone deacetylases to gene promoters. Regulates cell adhesion, migration and proliferation. May be required for segmental gene expression during hindbrain development. The chain is Zinc finger protein 703 (ZNF703) from Homo sapiens (Human).